We begin with the raw amino-acid sequence, 189 residues long: MFGVGIFEVLVILIVAVIALGPNKLPQTIVDIVKFFRAVKKTMAEAKETFDKEIQLSEIKQEALKYKDTLESEVNKLTKDIRLDELREISVDSLTKPLQETKEVLSEEAKNLQSTLESLNSDISYESSAAAQTPTTQESIPTDSTREIAYATQKPQNSIDSINSKESSVDSLHSPSIVESTQSSSSKDS.

The chain crosses the membrane as a helical span at residues 1-21; it reads MFGVGIFEVLVILIVAVIALG. The disordered stretch occupies residues 152 to 189; it reads TQKPQNSIDSINSKESSVDSLHSPSIVESTQSSSSKDS. Polar residues predominate over residues 153 to 189; the sequence is QKPQNSIDSINSKESSVDSLHSPSIVESTQSSSSKDS.

The protein belongs to the TatB family. In terms of assembly, the Tat system comprises two distinct complexes: a TatABC complex, containing multiple copies of TatA, TatB and TatC subunits, and a separate TatA complex, containing only TatA subunits. Substrates initially bind to the TatABC complex, which probably triggers association of the separate TatA complex to form the active translocon.

The protein localises to the cell inner membrane. In terms of biological role, part of the twin-arginine translocation (Tat) system that transports large folded proteins containing a characteristic twin-arginine motif in their signal peptide across membranes. Together with TatC, TatB is part of a receptor directly interacting with Tat signal peptides. TatB may form an oligomeric binding site that transiently accommodates folded Tat precursor proteins before their translocation. This is Sec-independent protein translocase protein TatB from Helicobacter hepaticus (strain ATCC 51449 / 3B1).